Consider the following 218-residue polypeptide: MIDFFEGVSWLIMPFSGVCVREADSSPMDVFGLWYSEMLRATGAHMREPSAMVLATCDVQNRPSARVVLLKKYGEAGFEFVTNFNSRKGREIADNPQVALVFDWRHIGRQVRVEGLATLMDASESDAYHASRSRESKISAWCSQQSAVLESRKLLLEQFERERQRFDGQEIPRPGHWGGVRVVPHVVEFWEDGAHRLHSRKQYSRGDSGSWSCVDLYP.

FMN is bound by residues 66–71 (RVVLLK), arginine 87, lysine 88, and glutamine 110. Lysine 71 serves as a coordination point for substrate. Substrate contacts are provided by tyrosine 128, arginine 132, and serine 136. FMN contacts are provided by residues 145–146 (QS) and tryptophan 190. 196–198 (RLH) serves as a coordination point for substrate. Arginine 200 serves as a coordination point for FMN.

Belongs to the pyridoxamine 5'-phosphate oxidase family. In terms of assembly, homodimer. FMN serves as cofactor.

It carries out the reaction pyridoxamine 5'-phosphate + O2 + H2O = pyridoxal 5'-phosphate + H2O2 + NH4(+). The enzyme catalyses pyridoxine 5'-phosphate + O2 = pyridoxal 5'-phosphate + H2O2. The protein operates within cofactor metabolism; pyridoxal 5'-phosphate salvage; pyridoxal 5'-phosphate from pyridoxamine 5'-phosphate: step 1/1. It functions in the pathway cofactor metabolism; pyridoxal 5'-phosphate salvage; pyridoxal 5'-phosphate from pyridoxine 5'-phosphate: step 1/1. Functionally, catalyzes the oxidation of either pyridoxine 5'-phosphate (PNP) or pyridoxamine 5'-phosphate (PMP) into pyridoxal 5'-phosphate (PLP). The sequence is that of Pyridoxine/pyridoxamine 5'-phosphate oxidase from Anaplasma marginale (strain St. Maries).